Here is a 246-residue protein sequence, read N- to C-terminus: tRNA (guanine-N(7)-)-methyltransferase (246 aa).

Glu-77, Glu-102, Asp-129, and Asp-152 together coordinate S-adenosyl-L-methionine. Residue Asp-152 is part of the active site. Substrate-binding positions include Lys-156, Asp-188, and 225–228 (TKFE).

This sequence belongs to the class I-like SAM-binding methyltransferase superfamily. TrmB family.

It catalyses the reaction guanosine(46) in tRNA + S-adenosyl-L-methionine = N(7)-methylguanosine(46) in tRNA + S-adenosyl-L-homocysteine. It functions in the pathway tRNA modification; N(7)-methylguanine-tRNA biosynthesis. Functionally, catalyzes the formation of N(7)-methylguanine at position 46 (m7G46) in tRNA. The sequence is that of tRNA (guanine-N(7)-)-methyltransferase from Haemophilus influenzae (strain PittEE).